Reading from the N-terminus, the 325-residue chain is Pyruvate dehydrogenase E1 component subunit beta (325 aa).

Glutamate 60 contacts thiamine diphosphate.

As to quaternary structure, heterodimer of an alpha and a beta chain. It depends on thiamine diphosphate as a cofactor.

It catalyses the reaction N(6)-[(R)-lipoyl]-L-lysyl-[protein] + pyruvate + H(+) = N(6)-[(R)-S(8)-acetyldihydrolipoyl]-L-lysyl-[protein] + CO2. Functionally, the pyruvate dehydrogenase complex catalyzes the overall conversion of pyruvate to acetyl-CoA and CO(2). It contains multiple copies of three enzymatic components: pyruvate dehydrogenase (E1), dihydrolipoamide acetyltransferase (E2) and lipoamide dehydrogenase (E3). The polypeptide is Pyruvate dehydrogenase E1 component subunit beta (pdhB) (Geobacillus stearothermophilus (Bacillus stearothermophilus)).